The sequence spans 245 residues: Phosphoadenosine 5'-phosphosulfate reductase (245 aa).

The active-site Nucleophile; cysteine thiosulfonate intermediate is the C239.

It belongs to the PAPS reductase family. CysH subfamily.

It localises to the cytoplasm. It carries out the reaction [thioredoxin]-disulfide + sulfite + adenosine 3',5'-bisphosphate + 2 H(+) = [thioredoxin]-dithiol + 3'-phosphoadenylyl sulfate. Its pathway is sulfur metabolism; hydrogen sulfide biosynthesis; sulfite from sulfate: step 3/3. Functionally, catalyzes the formation of sulfite from phosphoadenosine 5'-phosphosulfate (PAPS) using thioredoxin as an electron donor. The chain is Phosphoadenosine 5'-phosphosulfate reductase from Baumannia cicadellinicola subsp. Homalodisca coagulata.